A 101-amino-acid polypeptide reads, in one-letter code: Large ribosomal subunit protein uL24 (101 aa).

It belongs to the universal ribosomal protein uL24 family. Part of the 50S ribosomal subunit.

Functionally, one of two assembly initiator proteins, it binds directly to the 5'-end of the 23S rRNA, where it nucleates assembly of the 50S subunit. Its function is as follows. One of the proteins that surrounds the polypeptide exit tunnel on the outside of the subunit. The protein is Large ribosomal subunit protein uL24 of Cereibacter sphaeroides (strain ATCC 17029 / ATH 2.4.9) (Rhodobacter sphaeroides).